The primary structure comprises 389 residues: GTPase Obg (389 aa).

Residues 1–159 (MKFVDEAVIK…RELRLELLLL (159 aa)) enclose the Obg domain. In terms of domain architecture, OBG-type G spans 160–333 (ADVGLLGMPN…LAEKLFDFIK (174 aa)). GTP-binding positions include 166-173 (GMPNAGKS), 191-195 (FTTLV), 213-216 (DIPG), 283-286 (NKTD), and 314-316 (SAA). 2 residues coordinate Mg(2+): Ser-173 and Thr-193.

This sequence belongs to the TRAFAC class OBG-HflX-like GTPase superfamily. OBG GTPase family. In terms of assembly, monomer. Requires Mg(2+) as cofactor.

Its subcellular location is the cytoplasm. An essential GTPase which binds GTP, GDP and possibly (p)ppGpp with moderate affinity, with high nucleotide exchange rates and a fairly low GTP hydrolysis rate. Plays a role in control of the cell cycle, stress response, ribosome biogenesis and in those bacteria that undergo differentiation, in morphogenesis control. This chain is GTPase Obg, found in Shewanella amazonensis (strain ATCC BAA-1098 / SB2B).